The sequence spans 256 residues: Large ribosomal subunit protein eL8B (256 aa).

The tract at residues Met-1–Gly-37 is disordered.

Belongs to the eukaryotic ribosomal protein eL8 family. As to quaternary structure, component of the large ribosomal subunit (LSU). Mature yeast ribosomes consist of a small (40S) and a large (60S) subunit. The 40S small subunit contains 1 molecule of ribosomal RNA (18S rRNA) and 33 different proteins (encoded by 57 genes). The large 60S subunit contains 3 rRNA molecules (25S, 5.8S and 5S rRNA) and 46 different proteins (encoded by 81 genes).

It localises to the cytoplasm. In terms of biological role, component of the ribosome, a large ribonucleoprotein complex responsible for the synthesis of proteins in the cell. The small ribosomal subunit (SSU) binds messenger RNAs (mRNAs) and translates the encoded message by selecting cognate aminoacyl-transfer RNA (tRNA) molecules. The large subunit (LSU) contains the ribosomal catalytic site termed the peptidyl transferase center (PTC), which catalyzes the formation of peptide bonds, thereby polymerizing the amino acids delivered by tRNAs into a polypeptide chain. The nascent polypeptides leave the ribosome through a tunnel in the LSU and interact with protein factors that function in enzymatic processing, targeting, and the membrane insertion of nascent chains at the exit of the ribosomal tunnel. This is Large ribosomal subunit protein eL8B from Saccharomyces cerevisiae (strain ATCC 204508 / S288c) (Baker's yeast).